We begin with the raw amino-acid sequence, 195 residues long: Packaging protein 2 (195 aa).

The disordered stretch occupies residues 1–124; the sequence is MAPKKKLQLP…QEQQQRQGYR (124 aa). Acidic residues predominate over residues 15-53; the sequence is TDEEEYWDSQAEEVLDEEEEMMEDWDSLDEASEAEEVSD. The span at 54–63 shows a compositional bias: low complexity; that stretch reads ETPSPSVAFP.

This sequence belongs to the adenoviridae splicing factor family. In terms of assembly, part of a genome packaging complex composed of packaging proteins 1, 2 and 3; this complex specifically binds to the packaging sequence on the left end of viral genomic DNA and performs packaging of the viral genome. Self-assembles into higher-order structures.

It localises to the host nucleus. In terms of biological role, component of the packaging machinery which encapsidates the viral DNA into preformed capsids and transcriptional activator of the viral major late promoter (MLP). Binds, along with packaging proteins 1 and 3, to the specific packaging sequence on the left end of viral genomic DNA and plays an active role in packaging of the viral genome into preformed capsids. Specifically binds to the 5'-TTTG-3' nucleotides of the repeats making up the packaging sequence. Forms a transcription factor called DEF-A through cooperative binding with packaging protein 1. DEF-A binds to downstream elements of the major late promoter (MLP) and stimulates transcription from the MLP after initiation of viral DNA replication. Simultaneously suppresses early gene expression and is thus likely to participate in the early-late switch in the expression pattern of the late viral proteins. May as well enhance transcription from IVa2 and pIX promoters. The protein is Packaging protein 2 of Homo sapiens (Human).